Here is a 178-residue protein sequence, read N- to C-terminus: Alkyl hydroperoxide reductase AhpD (178 aa).

Cys130 serves as the catalytic Proton donor. The cysteines at positions 130 and 133 are disulfide-linked. The active-site Cysteine sulfenic acid (-SOH) intermediate is Cys133.

The protein belongs to the AhpD family. Homotrimer.

The catalysed reaction is N(6)-[(R)-dihydrolipoyl]-L-lysyl-[lipoyl-carrier protein] + a hydroperoxide = N(6)-[(R)-lipoyl]-L-lysyl-[lipoyl-carrier protein] + an alcohol + H2O. Its function is as follows. Antioxidant protein with alkyl hydroperoxidase activity. Required for the reduction of the AhpC active site cysteine residues and for the regeneration of the AhpC enzyme activity. This Mycobacterium marinum (strain ATCC BAA-535 / M) protein is Alkyl hydroperoxide reductase AhpD.